Consider the following 903-residue polypeptide: HTH-type transcriptional regulator MalT (903 aa).

Position 39–46 (39–46 (CPAGYGKT)) interacts with ATP. In terms of domain architecture, HTH luxR-type spans 832–897 (ELIRTSPLTQ…DAVQQAQRLL (66 aa)). Residues 856 to 875 (NDQIAGELEVAATTIKTHIR) constitute a DNA-binding region (H-T-H motif).

It belongs to the MalT family. As to quaternary structure, monomer in solution. Oligomerizes to an active state in the presence of the positive effectors ATP and maltotriose.

Activated by ATP and maltotriose, which are both required for DNA binding. Positively regulates the transcription of the maltose regulon whose gene products are responsible for uptake and catabolism of malto-oligosaccharides. Specifically binds to the promoter region of its target genes, recognizing a short DNA motif called the MalT box. The polypeptide is HTH-type transcriptional regulator MalT (Yersinia enterocolitica serotype O:8 / biotype 1B (strain NCTC 13174 / 8081)).